The sequence spans 271 residues: NADPH-dependent 7-cyano-7-deazaguanine reductase (271 aa).

Substrate is bound at residue 79 to 81 (IES). Residue 81–82 (SK) coordinates NADPH. Cysteine 178 serves as the catalytic Thioimide intermediate. Aspartate 185 (proton donor) is an active-site residue. Residue 217 to 218 (HE) coordinates substrate. Residue 246–247 (RG) coordinates NADPH.

The protein belongs to the GTP cyclohydrolase I family. QueF type 2 subfamily. In terms of assembly, homodimer.

Its subcellular location is the cytoplasm. It catalyses the reaction 7-aminomethyl-7-carbaguanine + 2 NADP(+) = 7-cyano-7-deazaguanine + 2 NADPH + 3 H(+). It functions in the pathway tRNA modification; tRNA-queuosine biosynthesis. Its function is as follows. Catalyzes the NADPH-dependent reduction of 7-cyano-7-deazaguanine (preQ0) to 7-aminomethyl-7-deazaguanine (preQ1). In Acinetobacter baylyi (strain ATCC 33305 / BD413 / ADP1), this protein is NADPH-dependent 7-cyano-7-deazaguanine reductase.